Consider the following 176-residue polypeptide: I-Kappa-B like protein G1 (176 aa).

ANK repeat units follow at residues 56–88 (EGRQ…DINS), 93–123 (FGNT…ELGA), and 127–156 (LYKT…VCDD).

Belongs to the polydnaviridae I-Kappa-B-like protein family.

Functionally, suppresses the host immune response through NF-kappa-B inactivation. Possesses ankyrin repeat domains required for NF-kappa-B binding but lacks the regulatory regions required for dissociation from NF-kappa-B and degradation. Therefore, prevents host NF-kappa-B release and subsequent activation. The sequence is that of I-Kappa-B like protein G1 (G3) from Microplitis demolitor (Parasitoid wasp).